The chain runs to 90 residues: uncharacterized protein (90 aa).

Residues 46–62 (MALLVVFLVSLFACTTI) form a helical membrane-spanning segment.

Its subcellular location is the membrane. This is an uncharacterized protein from Haemophilus influenzae (strain ATCC 51907 / DSM 11121 / KW20 / Rd).